The chain runs to 127 residues: MFRTMLGGKIHRATVTEADLNYVGSITVDQDLLDAAGIYPNEKVAIVNNNNGERFETYTIAGKRGSGVICLNGAAARLVQKGDIVIIMSYVQLSEPEIAAHEPKVVLVDGNNKIRDIISYEPPHTVL.

Ser-25 acts as the Schiff-base intermediate with substrate; via pyruvic acid in catalysis. Ser-25 bears the Pyruvic acid (Ser) mark. Thr-57 provides a ligand contact to substrate. Catalysis depends on Tyr-58, which acts as the Proton donor. A substrate-binding site is contributed by 73–75 (GAA).

Belongs to the PanD family. In terms of assembly, heterooctamer of four alpha and four beta subunits. The cofactor is pyruvate. Is synthesized initially as an inactive proenzyme, which is activated by self-cleavage at a specific serine bond to produce a beta-subunit with a hydroxyl group at its C-terminus and an alpha-subunit with a pyruvoyl group at its N-terminus.

It localises to the cytoplasm. The catalysed reaction is L-aspartate + H(+) = beta-alanine + CO2. It functions in the pathway cofactor biosynthesis; (R)-pantothenate biosynthesis; beta-alanine from L-aspartate: step 1/1. In terms of biological role, catalyzes the pyruvoyl-dependent decarboxylation of aspartate to produce beta-alanine. This is Aspartate 1-decarboxylase from Neisseria meningitidis serogroup B (strain ATCC BAA-335 / MC58).